The chain runs to 379 residues: Sterol 24-C-methyltransferase erg-4 (379 aa).

Belongs to the class I-like SAM-binding methyltransferase superfamily. Erg6/SMT family.

It catalyses the reaction lanosterol + S-adenosyl-L-methionine = eburicol + S-adenosyl-L-homocysteine + H(+). Its pathway is steroid metabolism; ergosterol biosynthesis. In terms of biological role, catalyzes the methyl transfer from S-adenosyl-methionine to the C-24 of lanosterol to form eburicol. The sequence is that of Sterol 24-C-methyltransferase erg-4 from Neurospora crassa (strain ATCC 24698 / 74-OR23-1A / CBS 708.71 / DSM 1257 / FGSC 987).